We begin with the raw amino-acid sequence, 638 residues long: 1-deoxy-D-xylulose-5-phosphate synthase (638 aa).

Thiamine diphosphate-binding positions include histidine 72 and 113-115 (GHA). Aspartate 144 contacts Mg(2+). Thiamine diphosphate contacts are provided by residues 145 to 146 (GA), asparagine 174, tyrosine 289, and glutamate 372. Asparagine 174 contacts Mg(2+).

It belongs to the transketolase family. DXPS subfamily. Homodimer. Mg(2+) is required as a cofactor. The cofactor is thiamine diphosphate.

It carries out the reaction D-glyceraldehyde 3-phosphate + pyruvate + H(+) = 1-deoxy-D-xylulose 5-phosphate + CO2. The protein operates within metabolic intermediate biosynthesis; 1-deoxy-D-xylulose 5-phosphate biosynthesis; 1-deoxy-D-xylulose 5-phosphate from D-glyceraldehyde 3-phosphate and pyruvate: step 1/1. Catalyzes the acyloin condensation reaction between C atoms 2 and 3 of pyruvate and glyceraldehyde 3-phosphate to yield 1-deoxy-D-xylulose-5-phosphate (DXP). This chain is 1-deoxy-D-xylulose-5-phosphate synthase, found in Gloeobacter violaceus (strain ATCC 29082 / PCC 7421).